The primary structure comprises 320 residues: Cytochrome f (320 aa).

An N-terminal signal peptide occupies residues 1–35 (MQTRNAFSWIKKEITRSISVLLMIYIITRAPISNA). Residues Tyr36, Cys56, Cys59, and His60 each contribute to the heme site. Residues 286–305 (VQGLLLFLASIILAQIFLVL) traverse the membrane as a helical segment.

The protein belongs to the cytochrome f family. The 4 large subunits of the cytochrome b6-f complex are cytochrome b6, subunit IV (17 kDa polypeptide, petD), cytochrome f and the Rieske protein, while the 4 small subunits are PetG, PetL, PetM and PetN. The complex functions as a dimer. Heme serves as cofactor.

It is found in the plastid. The protein localises to the chloroplast thylakoid membrane. Functionally, component of the cytochrome b6-f complex, which mediates electron transfer between photosystem II (PSII) and photosystem I (PSI), cyclic electron flow around PSI, and state transitions. This chain is Cytochrome f (petA), found in Vicia faba (Broad bean).